Consider the following 61-residue polypeptide: Conotoxin Tx-D021 (61 aa).

The N-terminal stretch at 1–22 (MRCLPVFVILLLLIASTPSVDA) is a signal peptide. Positions 23 to 48 (RAKTRDDMSLASFHDDAKRILQILQD) are excised as a propeptide. Cys60 is modified (cysteine amide).

The protein belongs to the conotoxin T superfamily. Contains 2 disulfide bonds that can be either 'C1-C3, C2-C4' or 'C1-C4, C2-C3', since these disulfide connectivities have been observed for conotoxins with cysteine framework V (for examples, see AC P0DQQ7 and AC P81755). In terms of tissue distribution, expressed by the venom duct.

The protein resides in the secreted. This Conus textile (Cloth-of-gold cone) protein is Conotoxin Tx-D021.